The chain runs to 435 residues: MAIHSRSDALAYQSGFGNQFSSEALPGALPIGQNSPQKHPLGLYAEQFSGTAFTVARSEARRTWLYRIKPSAAHPRYQRMGRQIAGQEQGPINPNRLRWNAFDIPAEPVDFIDGLIPLASTSAADQADGVSVYVYAANTSMQRAFFSADGEWLIVPQQGRLRIITELGLLDIEPLEIAVLPRGMKFRVQLLDSSARGYICENHGCALRLPELGPIGSNGLANPRDFLTPVAWFEDNQQPVELVQKFLGELWSTHLEHSPFDVVGWHGNNVAYKYDLRRFNTIGTVSYDHPDPSIFTVLTSPGAAHGQANIDFVIFPPRWMVAENTFRPPWFHRNLMNEFMGLIDGAYDAKAEGFMPGGASLHNCMSAHGPDNVTAEKAIAAELKPHKIENTMAFMFETGKVLRPSRHALGCPQLQADYDACWNDMTRTFNKEPRR.

H289 (proton acceptor) is an active-site residue. Fe cation is bound by residues H332 and E338. 2 residues coordinate homogentisate: Y347 and H368. H368 contacts Fe cation.

The protein belongs to the homogentisate dioxygenase family. In terms of assembly, hexamer; dimer of trimers. Requires Fe cation as cofactor.

The catalysed reaction is homogentisate + O2 = 4-maleylacetoacetate + H(+). It functions in the pathway amino-acid degradation; L-phenylalanine degradation; acetoacetate and fumarate from L-phenylalanine: step 4/6. Involved in the catabolism of homogentisate (2,5-dihydroxyphenylacetate or 2,5-OH-PhAc), a central intermediate in the degradation of phenylalanine and tyrosine. Catalyzes the oxidative ring cleavage of the aromatic ring of homogentisate to yield maleylacetoacetate. The chain is Homogentisate 1,2-dioxygenase from Pseudomonas savastanoi pv. phaseolicola (strain 1448A / Race 6) (Pseudomonas syringae pv. phaseolicola (strain 1448A / Race 6)).